A 137-amino-acid polypeptide reads, in one-letter code: Hydrogenase-4 component J (137 aa).

It to E.coli HycH.

Functionally, possible component of hydrogenase 4. In Escherichia coli (strain K12), this protein is Hydrogenase-4 component J.